The following is an 89-amino-acid chain: HssA/B-like protein 15 (89 aa).

Belongs to the hssA/B family.

The polypeptide is HssA/B-like protein 15 (hssl15) (Dictyostelium discoideum (Social amoeba)).